A 330-amino-acid polypeptide reads, in one-letter code: Cyclic AMP receptor-like protein E (330 aa).

The Extracellular portion of the chain corresponds to 1-10 (MLSLSSYVLN). A helical membrane pass occupies residues 11 to 31 (LVGSILCLIGCLFIIGHFFWI). Residues 32–40 (PLLRTSLSR) are Cytoplasmic-facing. Residues 41-61 (IIIYPTFILLLYDMVSFPSFI) form a helical membrane-spanning segment. Residues 62–85 (SKTADLYIERSTIICNFQEAIIQY) are Extracellular-facing. A helical membrane pass occupies residues 86 to 106 (LILSNFIWSVCISVNLLYLCF). Topologically, residues 107–116 (SPNKNLKKNE) are cytoplasmic. Residues 117–137 (LLYHLCSWGIPLIVVVITKIP) form a helical membrane-spanning segment. Topologically, residues 138 to 156 (NMISDNGNQCRFKSPNYIK) are extracellular. A helical membrane pass occupies residues 157-177 (FYLETILFIAFMLFNFIVAFI). Topologically, residues 178-213 (TIKHIISGNLRESETTTTSVLFVNEKKITTKKIVWR) are cytoplasmic. Residues 214–234 (LLLYPSILSICYIMTLVLSIY) traverse the membrane as a helical segment. Topologically, residues 235–274 (QFSTESYGSGGAYANSINNKRNDKNTESGNSNNNNNSYIE) are extracellular. N-linked (GlcNAc...) asparagine glycosylation is present at Asn269. Residues 275–295 (ILLYISKAIFLLQGFFNALVY) form a helical membrane-spanning segment. Topologically, residues 296-330 (LRSSKLRDRYKKITIFRKIFWRDEADYQSINDGFN) are cytoplasmic.

Belongs to the G-protein coupled receptor 5 family.

Its subcellular location is the membrane. Functionally, receptor for cAMP. The sequence is that of Cyclic AMP receptor-like protein E (crlE) from Dictyostelium discoideum (Social amoeba).